Reading from the N-terminus, the 65-residue chain is uncharacterized protein (65 aa).

Helical transmembrane passes span 4–24 and 45–65; these read TIWL…MLYP and FGGG…KTIG.

The protein resides in the cell membrane. This is an uncharacterized protein from Escherichia coli O157:H7.